Consider the following 885-residue polypeptide: Alpha-actinin (885 aa).

The actin-binding stretch occupies residues Met-1–His-242. Calponin-homology (CH) domains are found at residues Lys-26–Ala-130 and Met-139–His-245. Spectrin repeat units follow at residues Leu-270–Leu-377, His-389–Glu-494, Glu-508–Gln-614, and Leu-626–Glu-727. EF-hand domains are found at residues Glu-741–Asn-776 and Asp-780–Asp-815. Asp-754, Thr-758, Arg-760, Glu-765, Asp-793, Asn-795, Thr-797, and Tyr-799 together coordinate Ca(2+).

It belongs to the alpha-actinin family. As to quaternary structure, homodimer; antiparallel.

F-actin cross-linking protein which is thought to anchor actin to a variety of intracellular structures. This is a bundling protein. The polypeptide is Alpha-actinin (Dermatophagoides farinae (American house dust mite)).